A 346-amino-acid chain; its full sequence is S-adenosylmethionine:tRNA ribosyltransferase-isomerase (346 aa).

It belongs to the QueA family. In terms of assembly, monomer.

It localises to the cytoplasm. It catalyses the reaction 7-aminomethyl-7-carbaguanosine(34) in tRNA + S-adenosyl-L-methionine = epoxyqueuosine(34) in tRNA + adenine + L-methionine + 2 H(+). It functions in the pathway tRNA modification; tRNA-queuosine biosynthesis. In terms of biological role, transfers and isomerizes the ribose moiety from AdoMet to the 7-aminomethyl group of 7-deazaguanine (preQ1-tRNA) to give epoxyqueuosine (oQ-tRNA). The polypeptide is S-adenosylmethionine:tRNA ribosyltransferase-isomerase (Neisseria meningitidis serogroup C (strain 053442)).